We begin with the raw amino-acid sequence, 454 residues long: Toxin CfTX-A (454 aa).

The first 18 residues, 1 to 18 (MDYAFIVFLVCFVSGTLG), serve as a signal peptide directing secretion. Positions 19–25 (NRRRAKR) are excised as a propeptide. Positions 27-61 (VDEVTSGINQLVNQLNNVQQDTAAIKSALEELKTE) form a coiled coil.

Belongs to the jellyfish toxin family. Type II subfamily. As to quaternary structure, oligomer. Contains 2 disulfide bonds. Nematocytes.

The protein localises to the secreted. Its subcellular location is the nematocyst. It localises to the target cell membrane. In terms of biological role, the fraction containing this toxin and CfTX-A shows potent hemolytic activity. This fraction causes minor effects on the cardiovascular system of anesthetized rats (at 25 ug/kg), since it has no significant effects on heart rate but produces relatively small increases in mean arterial pressure. This Chironex fleckeri (Australian box jellyfish) protein is Toxin CfTX-A.